The chain runs to 294 residues: Melanocortin receptor 5 (294 aa).

Over 1–29 (FLDLQLNATEGNVSGPSVGNTSSPCEDMG) the chain is Extracellular. Residues asparagine 7, asparagine 12, and asparagine 20 are each glycosylated (N-linked (GlcNAc...) asparagine). The chain crosses the membrane as a helical span at residues 30–53 (IEVEVFLTLGLISLLENILVIGAI). Over 54 to 65 (ARNKNLHVPMYF) the chain is Cytoplasmic. Residues 66–89 (FVCSLAVADMLVSLSNSWETITIY) traverse the membrane as a helical segment. Residues 90 to 106 (LIANKHLVLSDTSVRHL) are Extracellular-facing. Residues 107–130 (DNVFDSMICISLVASMCSLLAVAV) traverse the membrane as a helical segment. The Cytoplasmic segment spans residues 131-147 (DRYVTIFYALRYQHLMT). The chain crosses the membrane as a helical span at residues 148–171 (GRRCGAIIAGIWALCTGCGPVFIV). The Extracellular segment spans residues 172-178 (YYESTYV). A helical transmembrane segment spans residues 179-203 (VVCLVAMFLTMLLLMASLYAHMFLQ). Over 204-231 (ARAHVRRIAALPGYRSARQRTSMKGAVT) the chain is Cytoplasmic. Residues 232 to 257 (LAMLLGVFIVCWAPFFLHLILMISCP) traverse the membrane as a helical segment. At 258–265 (QNLYCSCF) the chain is on the extracellular side. The chain crosses the membrane as a helical span at residues 266–289 (MSHFNMYLILIMCNSVIDPLIYAF). The Cytoplasmic segment spans residues 290-294 (RSQEK).

The protein belongs to the G-protein coupled receptor 1 family.

Its subcellular location is the cell membrane. Its function is as follows. Receptor for MSH (alpha, beta and gamma) and ACTH. The activity of this receptor is mediated by G proteins which activate adenylate cyclase. This receptor is a possible mediator of the immunomodulation properties of melanocortins. This is Melanocortin receptor 5 (MC5R) from Sus scrofa (Pig).